The following is a 132-amino-acid chain: UPF0047 protein YugU (132 aa).

The protein belongs to the UPF0047 family.

In Bacillus subtilis (strain 168), this protein is UPF0047 protein YugU (yugU).